Consider the following 293-residue polypeptide: Shikimate kinase (293 aa).

Residue 87–97 (PLAGGLKSSSA) coordinates ATP.

It belongs to the GHMP kinase family. Archaeal shikimate kinase subfamily.

The protein resides in the cytoplasm. The catalysed reaction is shikimate + ATP = 3-phosphoshikimate + ADP + H(+). The protein operates within metabolic intermediate biosynthesis; chorismate biosynthesis; chorismate from D-erythrose 4-phosphate and phosphoenolpyruvate: step 5/7. The sequence is that of Shikimate kinase from Methanosarcina mazei (strain ATCC BAA-159 / DSM 3647 / Goe1 / Go1 / JCM 11833 / OCM 88) (Methanosarcina frisia).